The sequence spans 325 residues: Tetraacyldisaccharide 4'-kinase (325 aa).

Thr-55–Thr-62 is an ATP binding site.

The protein belongs to the LpxK family.

It carries out the reaction a lipid A disaccharide + ATP = a lipid IVA + ADP + H(+). The protein operates within glycolipid biosynthesis; lipid IV(A) biosynthesis; lipid IV(A) from (3R)-3-hydroxytetradecanoyl-[acyl-carrier-protein] and UDP-N-acetyl-alpha-D-glucosamine: step 6/6. Functionally, transfers the gamma-phosphate of ATP to the 4'-position of a tetraacyldisaccharide 1-phosphate intermediate (termed DS-1-P) to form tetraacyldisaccharide 1,4'-bis-phosphate (lipid IVA). The polypeptide is Tetraacyldisaccharide 4'-kinase (Cronobacter sakazakii (strain ATCC BAA-894) (Enterobacter sakazakii)).